The chain runs to 166 residues: Transcriptional repressor NrdR (166 aa).

A zinc finger spans residues 3–34 (CPFCRNPDSRVVDSRMADDGSSIRRRRQCPEC). Positions 46–136 (LSVIKRSGVG…VYQAFESLED (91 aa)) constitute an ATP-cone domain.

Belongs to the NrdR family. Requires Zn(2+) as cofactor.

In terms of biological role, negatively regulates transcription of bacterial ribonucleotide reductase nrd genes and operons by binding to NrdR-boxes. The protein is Transcriptional repressor NrdR of Paenarthrobacter aurescens (strain TC1).